The chain runs to 370 residues: Flagellar P-ring protein (370 aa).

A signal peptide spans 1–27 (MPARPIPVPLLALALAAALAVPSPAAA).

It belongs to the FlgI family. As to quaternary structure, the basal body constitutes a major portion of the flagellar organelle and consists of four rings (L,P,S, and M) mounted on a central rod.

It localises to the periplasm. Its subcellular location is the bacterial flagellum basal body. Functionally, assembles around the rod to form the L-ring and probably protects the motor/basal body from shearing forces during rotation. This Anaeromyxobacter sp. (strain K) protein is Flagellar P-ring protein.